A 450-amino-acid chain; its full sequence is Tubulin alpha-3 chain (450 aa).

Positions 11, 71, 144, 145, 179, 206, and 228 each coordinate GTP. Glutamate 71 contacts Mg(2+). Glutamate 254 is a catalytic residue.

It belongs to the tubulin family. As to quaternary structure, dimer of alpha and beta chains. A typical microtubule is a hollow water-filled tube with an outer diameter of 25 nm and an inner diameter of 15 nM. Alpha-beta heterodimers associate head-to-tail to form protofilaments running lengthwise along the microtubule wall with the beta-tubulin subunit facing the microtubule plus end conferring a structural polarity. Microtubules usually have 13 protofilaments but different protofilament numbers can be found in some organisms and specialized cells. The cofactor is Mg(2+). Undergoes a tyrosination/detyrosination cycle, the cyclic removal and re-addition of a C-terminal tyrosine residue by the enzymes tubulin tyrosine carboxypeptidase (TTCP) and tubulin tyrosine ligase (TTL), respectively.

Its subcellular location is the cytoplasm. The protein resides in the cytoskeleton. It catalyses the reaction GTP + H2O = GDP + phosphate + H(+). Tubulin is the major constituent of microtubules, a cylinder consisting of laterally associated linear protofilaments composed of alpha- and beta-tubulin heterodimers. Microtubules grow by the addition of GTP-tubulin dimers to the microtubule end, where a stabilizing cap forms. Below the cap, tubulin dimers are in GDP-bound state, owing to GTPase activity of alpha-tubulin. This Eleusine indica (Goosegrass) protein is Tubulin alpha-3 chain (TUBA3).